We begin with the raw amino-acid sequence, 325 residues long: uncharacterized protein (325 aa).

Coiled coils occupy residues 38-69 (VHVA…QNQS) and 201-229 (ANTD…LEFK).

This is an uncharacterized protein from Acanthamoeba polyphaga (Amoeba).